Consider the following 663-residue polypeptide: Cyclic nucleotide-gated channel alpha-2 (663 aa).

The interval 1-61 (MTEKANGVKS…QLAEMDAPQQ (61 aa)) is disordered. Over 1–144 (MTEKANGVKS…PAGDWYYRWL (144 aa)) the chain is Cytoplasmic. Over residues 12–23 (PANNHNHHAPPA) the composition is skewed to low complexity. A helical transmembrane segment spans residues 145–166 (FLIALPVLYNWCLLVARACFSD). The Extracellular portion of the chain corresponds to 167–176 (LQKGYYIVWL). A helical transmembrane segment spans residues 177–197 (VLDYVSDVVYIADLFIRLRTG). Residues 198 to 222 (FLEQGLLVKDTKKLRDNYIHTMQFK) lie on the Cytoplasmic side of the membrane. The helical transmembrane segment at 223-241 (LDVASIIPTDLIYFAVGIH) threads the bilayer. At 242 to 246 (NPEVR) the chain is on the extracellular side. Residues 247–265 (FNRLLHFARMFEFFDRTET) traverse the membrane as a helical segment. Topologically, residues 266–272 (RTSYPNI) are cytoplasmic. Positions 270–378 (PNIFRISNLI…GNVGSMISNM (109 aa)) are ion conduction pathway. A helical transmembrane segment spans residues 273–296 (FRISNLILYILIIIHWNACIYYAI). Over 297 to 319 (SKSIGFGVDTWVYPNITDPEYGY) the chain is Extracellular. A run of 2 helical transmembrane segments spans residues 320 to 354 (LSREYIYCLYWSTLTLTTIGETPPPVKDEEYLFVI) and 355 to 379 (FDFLIGVLIFATIVGNVGSMISNMN). The segment at 337 to 340 (TIGE) is selectivity filter. The segment at 380–456 (ATRAEFQAKI…STLKKVRIFQ (77 aa)) is C-linker. Residues 380 to 663 (ATRAEFQAKI…NSPEPPAEKP (284 aa)) are Cytoplasmic-facing. The segment at 460–580 (AGLLVELVLK…EERGREILMK (121 aa)) is cyclic nucleotide-binding domain. Positions 520, 523, 536, and 537 each coordinate 3',5'-cyclic GMP. 3',5'-cyclic AMP contacts are provided by R536 and T537. The stretch at 597-651 (VQEKLEQLETNMDTLYTRFARLLAEYTGAQQKLKQRITVLETKMKQNNEDDSLSD) forms a coiled coil. Residues 640–663 (MKQNNEDDSLSDGMNSPEPPAEKP) form a disordered region.

The protein belongs to the cyclic nucleotide-gated cation channel (TC 1.A.1.5) family. CNGA2 subfamily. The olfactory cyclic nucleotide-gated channel is an heterotetramer composed of CNGA2, CNGA4 and CNGB1b subunits with 2:1:1 stoichiometry. In terms of tissue distribution, olfactory neurons.

It localises to the cell projection. The protein localises to the cilium membrane. It catalyses the reaction Ca(2+)(in) = Ca(2+)(out). It carries out the reaction Na(+)(in) = Na(+)(out). The catalysed reaction is K(+)(in) = K(+)(out). The enzyme catalyses NH4(+)(in) = NH4(+)(out). It catalyses the reaction Rb(+)(in) = Rb(+)(out). It carries out the reaction Li(+)(in) = Li(+)(out). The catalysed reaction is Cs(+)(in) = Cs(+)(out). In terms of biological role, pore-forming subunit of the olfactory cyclic nucleotide-gated channel. Operates in the cilia of olfactory sensory neurons where chemical stimulation of the odorant is converted to an electrical signal. Mediates odorant-induced cAMP-dependent Ca(2+) influx triggering neuron depolarization. The rise of intracellular Ca(2+) levels potentiates the olfactory response by activating Ca(2+)-dependent Cl(-) channels, but it also serves as a negative feedback signal to desensitize the channel for rapid adaptation to odorants. Conducts cAMP- and cGMP-gated ion currents, with permeability for monovalent and divalent cations. The protein is Cyclic nucleotide-gated channel alpha-2 of Bos taurus (Bovine).